Consider the following 148-residue polypeptide: [Ribosomal protein bS18]-alanine N-acetyltransferase (148 aa).

The N-acetyltransferase domain maps to 2–147; it reads NTISILSTTD…DAIIMALPIS (146 aa). Acetyl-CoA is bound by residues 69-71 and 77-82; these read IAV and RRGLGR. Glutamate 103 (proton acceptor) is an active-site residue. Acetyl-CoA is bound at residue asparagine 108. The active-site Proton donor is tyrosine 115.

The protein belongs to the acetyltransferase family. RimI subfamily.

It localises to the cytoplasm. It carries out the reaction N-terminal L-alanyl-[ribosomal protein bS18] + acetyl-CoA = N-terminal N(alpha)-acetyl-L-alanyl-[ribosomal protein bS18] + CoA + H(+). Functionally, acetylates the N-terminal alanine of ribosomal protein bS18. The sequence is that of [Ribosomal protein bS18]-alanine N-acetyltransferase from Salmonella typhimurium (strain LT2 / SGSC1412 / ATCC 700720).